Here is a 674-residue protein sequence, read N- to C-terminus: DNA ligase (674 aa).

Residues 35–39 (DFEFD), 84–85 (SL), and E118 contribute to the NAD(+) site. K120 (N6-AMP-lysine intermediate) is an active-site residue. NAD(+) is bound by residues R141, E184, K297, and K321. 4 residues coordinate Zn(2+): C415, C418, C433, and C439. The BRCT domain maps to 598–674 (QVNRNFEGVT…VSEDEFEAML (77 aa)).

This sequence belongs to the NAD-dependent DNA ligase family. LigA subfamily. The cofactor is Mg(2+). It depends on Mn(2+) as a cofactor.

It carries out the reaction NAD(+) + (deoxyribonucleotide)n-3'-hydroxyl + 5'-phospho-(deoxyribonucleotide)m = (deoxyribonucleotide)n+m + AMP + beta-nicotinamide D-nucleotide.. Functionally, DNA ligase that catalyzes the formation of phosphodiester linkages between 5'-phosphoryl and 3'-hydroxyl groups in double-stranded DNA using NAD as a coenzyme and as the energy source for the reaction. It is essential for DNA replication and repair of damaged DNA. The protein is DNA ligase of Pelodictyon phaeoclathratiforme (strain DSM 5477 / BU-1).